Reading from the N-terminus, the 251-residue chain is 1-(5-phosphoribosyl)-5-[(5-phosphoribosylamino)methylideneamino] imidazole-4-carboxamide isomerase (251 aa).

Asp-8 acts as the Proton acceptor in catalysis. Catalysis depends on Asp-131, which acts as the Proton donor.

This sequence belongs to the HisA/HisF family.

Its subcellular location is the cytoplasm. The catalysed reaction is 1-(5-phospho-beta-D-ribosyl)-5-[(5-phospho-beta-D-ribosylamino)methylideneamino]imidazole-4-carboxamide = 5-[(5-phospho-1-deoxy-D-ribulos-1-ylimino)methylamino]-1-(5-phospho-beta-D-ribosyl)imidazole-4-carboxamide. Its pathway is amino-acid biosynthesis; L-histidine biosynthesis; L-histidine from 5-phospho-alpha-D-ribose 1-diphosphate: step 4/9. This Burkholderia cenocepacia (strain HI2424) protein is 1-(5-phosphoribosyl)-5-[(5-phosphoribosylamino)methylideneamino] imidazole-4-carboxamide isomerase.